We begin with the raw amino-acid sequence, 456 residues long: NADPH-ferredoxin reductase FprA (456 aa).

4 residues coordinate FAD: Ser17, Glu43, Leu51, and Val87. NADP(+) contacts are provided by residues Arg113, 158–161, 202–203, and Glu214; these read NGNV and RR. Residues Trp362 and 369 to 371 contribute to the FAD site; that span reads GVI. NADP(+) is bound at residue Gly369.

The protein belongs to the ferredoxin--NADP reductase type 1 family. In terms of assembly, monomer. The cofactor is FAD.

The catalysed reaction is 2 reduced [2Fe-2S]-[ferredoxin] + NADP(+) + H(+) = 2 oxidized [2Fe-2S]-[ferredoxin] + NADPH. In terms of biological role, may serve as electron transfer protein and supply electrons to P450 systems. The chain is NADPH-ferredoxin reductase FprA (fprA) from Mycobacterium leprae (strain TN).